A 237-amino-acid chain; its full sequence is Phosphoribosylaminoimidazole-succinocarboxamide synthase (237 aa).

The protein belongs to the SAICAR synthetase family.

The enzyme catalyses 5-amino-1-(5-phospho-D-ribosyl)imidazole-4-carboxylate + L-aspartate + ATP = (2S)-2-[5-amino-1-(5-phospho-beta-D-ribosyl)imidazole-4-carboxamido]succinate + ADP + phosphate + 2 H(+). It participates in purine metabolism; IMP biosynthesis via de novo pathway; 5-amino-1-(5-phospho-D-ribosyl)imidazole-4-carboxamide from 5-amino-1-(5-phospho-D-ribosyl)imidazole-4-carboxylate: step 1/2. This Photorhabdus laumondii subsp. laumondii (strain DSM 15139 / CIP 105565 / TT01) (Photorhabdus luminescens subsp. laumondii) protein is Phosphoribosylaminoimidazole-succinocarboxamide synthase.